Here is a 349-residue protein sequence, read N- to C-terminus: Isopentenyl-diphosphate delta-isomerase (349 aa).

Position 9 to 10 (9 to 10 (RK)) interacts with substrate. FMN-binding positions include 65 to 67 (AMT), serine 95, and asparagine 124. 95–97 (STH) is a binding site for substrate. A substrate-binding site is contributed by glutamine 154. A Mg(2+)-binding site is contributed by glutamate 155. FMN-binding positions include lysine 186, serine 211, threonine 216, 262-264 (GLR), and 283-284 (SR).

This sequence belongs to the IPP isomerase type 2 family. Homooctamer. Dimer of tetramers. FMN is required as a cofactor. NADPH serves as cofactor. The cofactor is Mg(2+).

Its subcellular location is the cytoplasm. The enzyme catalyses isopentenyl diphosphate = dimethylallyl diphosphate. In terms of biological role, involved in the biosynthesis of isoprenoids. Catalyzes the 1,3-allylic rearrangement of the homoallylic substrate isopentenyl (IPP) to its allylic isomer, dimethylallyl diphosphate (DMAPP). The polypeptide is Isopentenyl-diphosphate delta-isomerase (Staphylococcus aureus (strain N315)).